Reading from the N-terminus, the 244-residue chain is Secreted RxLR effector protein RXLR-C05 (244 aa).

The N-terminal stretch at 1-21 (MRGAFYVATAFLIASSTRTAA) is a signal peptide. The segment covering 37 to 46 (LPVGDSDTKS) has biased composition (basic and acidic residues). The segment at 37–56 (LPVGDSDTKSLPRRSLKGSG) is disordered. The RxLR-dEER signature appears at 50–68 (RSLKGSGDRLEIPVAEEER).

Belongs to the RxLR effector family.

The protein resides in the secreted. Its subcellular location is the host cytoplasm. The protein localises to the host nucleus. Functionally, secreted effector that suppresses pattern-triggered immunity (PTI) in plant host. The protein is Secreted RxLR effector protein RXLR-C05 of Plasmopara halstedii (Downy mildew of sunflower).